The primary structure comprises 458 residues: GTPase Obg (458 aa).

The Obg domain maps to 1–157 (MSFLDRVKIY…ITLYLELKVL (157 aa)). In terms of domain architecture, OBG-type G spans 158 to 326 (ADLGLVGFPN…VLNEIVKVIS (169 aa)). Residues 164–171 (GFPNAGKS), 189–193 (FTTLN), 210–213 (DIPG), 280–283 (NKAD), and 307–309 (SAA) contribute to the GTP site. Residues S171 and T191 each contribute to the Mg(2+) site. The region spanning 341-419 (AVHGVEPLFK…VGQKEFEWSG (79 aa)) is the OCT domain. Residues 420-458 (TELDSERAEQPDFEGYKRRTTQAERLEKRRQRRLKKEEK) form a disordered region. Over residues 423–446 (DSERAEQPDFEGYKRRTTQAERLE) the composition is skewed to basic and acidic residues. The span at 447 to 458 (KRRQRRLKKEEK) shows a compositional bias: basic residues.

This sequence belongs to the TRAFAC class OBG-HflX-like GTPase superfamily. OBG GTPase family. As to quaternary structure, monomer. Mg(2+) is required as a cofactor.

The protein resides in the cytoplasm. Its function is as follows. An essential GTPase which binds GTP, GDP and possibly (p)ppGpp with moderate affinity, with high nucleotide exchange rates and a fairly low GTP hydrolysis rate. Plays a role in control of the cell cycle, stress response, ribosome biogenesis and in those bacteria that undergo differentiation, in morphogenesis control. In Elusimicrobium minutum (strain Pei191), this protein is GTPase Obg.